The primary structure comprises 114 residues: Cell cycle protein GpsB (114 aa).

Residues Y42–R77 are a coiled coil. The segment at A74–D99 is disordered. A compositionally biased stretch (low complexity) spans S85–N97.

The protein belongs to the GpsB family. Forms polymers through the coiled coil domains. Interacts with PBP1, MreC and EzrA.

It localises to the cytoplasm. Its function is as follows. Divisome component that associates with the complex late in its assembly, after the Z-ring is formed, and is dependent on DivIC and PBP2B for its recruitment to the divisome. Together with EzrA, is a key component of the system that regulates PBP1 localization during cell cycle progression. Its main role could be the removal of PBP1 from the cell pole after pole maturation is completed. Also contributes to the recruitment of PBP1 to the division complex. Not essential for septum formation. The chain is Cell cycle protein GpsB from Staphylococcus aureus (strain Mu3 / ATCC 700698).